The primary structure comprises 76 residues: Conotoxin Cal5a L3 (76 aa).

Positions 1–22 (MRFYIGLMAALMLTSVLRTDSA) are cleaved as a signal peptide. A propeptide spanning residues 23–42 (SVGQTGTKSELAVIERVIRQ) is cleaved from the precursor. A 4-hydroxyproline modification is found at Pro-50. Residues Pro-58, Pro-62, and Pro-64 each carry the 4-hydroxyproline; partial modification.

This sequence belongs to the conotoxin T superfamily. Post-translationally, contains 2 disulfide bonds that can be either 'C1-C3, C2-C4' or 'C1-C4, C2-C3', since these disulfide connectivities have been observed for conotoxins with cysteine framework V (for examples, see AC P0DQQ7 and AC P81755). Expressed by the venom duct.

It is found in the secreted. In terms of biological role, probable neurotoxin with unknown target. Possibly targets ion channels. The polypeptide is Conotoxin Cal5a L3 (Californiconus californicus (California cone)).